The following is a 182-amino-acid chain: Adenine phosphoribosyltransferase 4 (182 aa).

The protein belongs to the purine/pyrimidine phosphoribosyltransferase family. Homodimer.

Its subcellular location is the cytoplasm. It carries out the reaction AMP + diphosphate = 5-phospho-alpha-D-ribose 1-diphosphate + adenine. It participates in purine metabolism; AMP biosynthesis via salvage pathway; AMP from adenine: step 1/1. Functionally, catalyzes a salvage reaction resulting in the formation of AMP, that is energically less costly than de novo synthesis. May contribute to the recycling of adenine into adenylate nucleotides and the inactivation of cytokinins by phosphoribosylation. Possesses low activity toward adenine, but can efficiently convert cytokinins from free bases (active form) to the corresponding nucleotides (inactive form). This chain is Adenine phosphoribosyltransferase 4 (APT4), found in Arabidopsis thaliana (Mouse-ear cress).